A 37-amino-acid polypeptide reads, in one-letter code: Large ribosomal subunit protein bL36c (37 aa).

This sequence belongs to the bacterial ribosomal protein bL36 family.

It localises to the plastid. The protein resides in the chloroplast. This chain is Large ribosomal subunit protein bL36c, found in Cyanidioschyzon merolae (strain NIES-3377 / 10D) (Unicellular red alga).